The sequence spans 313 residues: Non-functional target of rapamycin complex subunit LST8-2 (313 aa).

7 WD repeats span residues 1–35 (MFEN…CYFS), 38–76 (YPDL…PHIP), 82–121 (SHTK…CQRE), 123–162 (RSVS…CSCE), 166–205 (EVGT…QTMT), 215–255 (AHNS…LEKV), and 258–297 (GHER…EEMV).

The protein belongs to the WD repeat LST8 family.

Probable non-functional protein. The protein is Non-functional target of rapamycin complex subunit LST8-2 of Arabidopsis thaliana (Mouse-ear cress).